The primary structure comprises 129 residues: Tumor necrosis factor receptor superfamily member 12A (129 aa).

The N-terminal stretch at 1 to 27 is a signal peptide; that stretch reads MASAWPRSLPQILVLGFGLVLMRAAAG. Residues 28 to 80 are Extracellular-facing; the sequence is EQAPGTSPCSSGSSWSADLDKCMDCASCPARPHSDFCLGCAAAPPAHFRLLWP. 3 disulfides stabilise this stretch: Cys-36/Cys-49, Cys-52/Cys-67, and Cys-55/Cys-64. The TNFR-Cys; atypical repeat unit spans residues 36–67; sequence CSSGSSWSADLDKCMDCASCPARPHSDFCLGC. A helical transmembrane segment spans residues 81–101; the sequence is ILGGALSLVLVLALVSSFLVW. The Cytoplasmic portion of the chain corresponds to 102–129; that stretch reads RRCRRREKFTTPIEETGGEGCPGVALIQ.

In terms of assembly, associates with TRAF1 and TRAF2, and probably also with TRAF3. In terms of tissue distribution, highly expressed in fetal heart, intestine, kidney, liver, lung and skin, and in adult heart and ovary. Intermediate expression in adult kidney, lung and skin.

It localises to the membrane. In terms of biological role, receptor for TNFSF12/TWEAK. Weak inducer of apoptosis in some cell types. Promotes angiogenesis and the proliferation of endothelial cells. May modulate cellular adhesion to matrix proteins. The sequence is that of Tumor necrosis factor receptor superfamily member 12A (Tnfrsf12a) from Mus musculus (Mouse).